Here is a 250-residue protein sequence, read N- to C-terminus: 5'-nucleotidase SurE (250 aa).

4 residues coordinate a divalent metal cation: Asp8, Asp9, Ser40, and Asn92.

It belongs to the SurE nucleotidase family. The cofactor is a divalent metal cation.

The protein localises to the cytoplasm. The catalysed reaction is a ribonucleoside 5'-phosphate + H2O = a ribonucleoside + phosphate. Nucleotidase that shows phosphatase activity on nucleoside 5'-monophosphates. This is 5'-nucleotidase SurE from Dichelobacter nodosus (strain VCS1703A).